We begin with the raw amino-acid sequence, 221 residues long: Adenylate kinase (221 aa).

10–15 (GAGKGT) contributes to the ATP binding site. The interval 30-59 (STGDMLRAAVKAGTEFGVAAKKIMDAGGLV) is NMP. AMP contacts are provided by residues Thr-31, Arg-36, 57–59 (GLV), 85–88 (GFPR), and Gln-92. Residues 122–159 (GRRVHPASGRTYHIKYNPPKVEGKDDVTGDALIQRDDD) form an LID region. ATP-binding positions include Arg-123 and 132 to 133 (TY). 2 residues coordinate AMP: Arg-156 and Arg-167. Gly-207 serves as a coordination point for ATP.

The protein belongs to the adenylate kinase family. Monomer.

Its subcellular location is the cytoplasm. The enzyme catalyses AMP + ATP = 2 ADP. It functions in the pathway purine metabolism; AMP biosynthesis via salvage pathway; AMP from ADP: step 1/1. Its function is as follows. Catalyzes the reversible transfer of the terminal phosphate group between ATP and AMP. Plays an important role in cellular energy homeostasis and in adenine nucleotide metabolism. The sequence is that of Adenylate kinase from Polynucleobacter asymbioticus (strain DSM 18221 / CIP 109841 / QLW-P1DMWA-1) (Polynucleobacter necessarius subsp. asymbioticus).